The primary structure comprises 840 residues: Lethal(3)malignant brain tumor-like protein 1 (840 aa).

A Phosphoserine modification is found at serine 117. The disordered stretch occupies residues glutamate 127–glutamate 269. Over residues proline 156 to serine 165 the composition is skewed to acidic residues. Residues valine 200–serine 210 show a composition bias toward polar residues. A compositionally biased stretch (basic and acidic residues) spans alanine 236–glutamate 247. Positions proline 250 to alanine 266 are enriched in polar residues. MBT repeat units lie at residues tryptophan 274 to proline 374, phenylalanine 382 to proline 481, and phenylalanine 490 to proline 585. An interaction with monomethylated and dimethylated peptides region spans residues phenylalanine 447 to tyrosine 454. Residues histidine 580–arginine 605 form a disordered region. The segment at serine 613 to leucine 656 adopts a CCHHC-type zinc-finger fold. The Zn(2+) site is built by cysteine 622, cysteine 627, histidine 640, and cysteine 646. The interval lysine 657–proline 697 is disordered. Positions proline 677–lysine 695 are enriched in basic residues.

Homodimer. Interacts with RB1/RB (when monomethylated at 'Lys-860'). Interacts with p53/TP53 (when monomethylated at 'Lys-382'). Interacts with CBX3, ETV6, KMT5A and VCP/p97. In terms of processing, ubiquitinated in a VCP/p97-dependent way following DNA damage, leading to its removal from DNA damage sites, promoting accessibility of H4K20me2 mark for DNA repair protein TP53BP1, which is then recruited to DNA damage sites. As to expression, widely expressed. Expression is reduced in colorectal cancer cell line SW480 and promyelocytic leukemia cell line HL-60.

It localises to the nucleus. Its function is as follows. Polycomb group (PcG) protein that specifically recognizes and binds mono- and dimethyllysine residues on target proteins, thereby acting as a 'reader' of a network of post-translational modifications. PcG proteins maintain the transcriptionally repressive state of genes: acts as a chromatin compaction factor by recognizing and binding mono- and dimethylated histone H1b/H1-4 at 'Lys-26' (H1bK26me1 and H1bK26me2) and histone H4 at 'Lys-20' (H4K20me1 and H4K20me2), leading to condense chromatin and repress transcription. Recognizes and binds p53/TP53 monomethylated at 'Lys-382', leading to repress p53/TP53-target genes. Also recognizes and binds RB1/RB monomethylated at 'Lys-860'. Participates in the ETV6-mediated repression. Probably plays a role in cell proliferation. Overexpression induces multinucleated cells, suggesting that it is required to accomplish normal mitosis. This Homo sapiens (Human) protein is Lethal(3)malignant brain tumor-like protein 1 (L3MBTL1).